Reading from the N-terminus, the 61-residue chain is Protein stunted (61 aa).

Residues 3–15 (AWRAAGITYIQYS) are sufficient for mth activation.

This sequence belongs to the eukaryotic ATPase epsilon family.

Functionally, activates the G-protein coupled receptor mth in vitro, leading to increased intracellular calcium ion levels. This chain is Protein stunted, found in Drosophila melanogaster (Fruit fly).